A 629-amino-acid polypeptide reads, in one-letter code: Chaperone protein DnaK (629 aa).

Residue Thr-195 is modified to Phosphothreonine; by autocatalysis. 2 disordered regions span residues 514–533 (EAEQNAEADRKRRERVEKRN) and 543–629 (LGQL…KPAE). The span at 555-590 (DAKDRLKAAADEAEEAVRSDDDSRIERAQKQLEEAM) shows a compositional bias: basic and acidic residues. The span at 595–614 (TAAQSGSQNQAGQGAQTQTG) shows a compositional bias: low complexity. The span at 615–629 (RQEDDVIDADFKPAE) shows a compositional bias: basic and acidic residues.

It belongs to the heat shock protein 70 family.

In terms of biological role, acts as a chaperone. The sequence is that of Chaperone protein DnaK from Deinococcus geothermalis (strain DSM 11300 / CIP 105573 / AG-3a).